We begin with the raw amino-acid sequence, 367 residues long: Probable butyrate kinase (367 aa).

It belongs to the acetokinase family.

It localises to the cytoplasm. The enzyme catalyses butanoate + ATP = butanoyl phosphate + ADP. The sequence is that of Probable butyrate kinase from Bacillus cereus (strain ZK / E33L).